Consider the following 223-residue polypeptide: Large ribosomal subunit protein uL3 (223 aa).

It belongs to the universal ribosomal protein uL3 family. As to quaternary structure, part of the 50S ribosomal subunit. Forms a cluster with proteins L14 and L19.

Its function is as follows. One of the primary rRNA binding proteins, it binds directly near the 3'-end of the 23S rRNA, where it nucleates assembly of the 50S subunit. In Nocardioides sp. (strain ATCC BAA-499 / JS614), this protein is Large ribosomal subunit protein uL3.